The following is a 375-amino-acid chain: UDP-N-acetylglucosamine--N-acetylmuramyl-(pentapeptide) pyrophosphoryl-undecaprenol N-acetylglucosamine transferase (375 aa).

Residues 13–15, asparagine 124, arginine 165, serine 193, and glutamine 294 each bind UDP-N-acetyl-alpha-D-glucosamine; that span reads TGG.

It belongs to the glycosyltransferase 28 family. MurG subfamily.

It is found in the cell inner membrane. It catalyses the reaction di-trans,octa-cis-undecaprenyl diphospho-N-acetyl-alpha-D-muramoyl-L-alanyl-D-glutamyl-meso-2,6-diaminopimeloyl-D-alanyl-D-alanine + UDP-N-acetyl-alpha-D-glucosamine = di-trans,octa-cis-undecaprenyl diphospho-[N-acetyl-alpha-D-glucosaminyl-(1-&gt;4)]-N-acetyl-alpha-D-muramoyl-L-alanyl-D-glutamyl-meso-2,6-diaminopimeloyl-D-alanyl-D-alanine + UDP + H(+). It functions in the pathway cell wall biogenesis; peptidoglycan biosynthesis. Functionally, cell wall formation. Catalyzes the transfer of a GlcNAc subunit on undecaprenyl-pyrophosphoryl-MurNAc-pentapeptide (lipid intermediate I) to form undecaprenyl-pyrophosphoryl-MurNAc-(pentapeptide)GlcNAc (lipid intermediate II). This is UDP-N-acetylglucosamine--N-acetylmuramyl-(pentapeptide) pyrophosphoryl-undecaprenol N-acetylglucosamine transferase from Mesorhizobium japonicum (strain LMG 29417 / CECT 9101 / MAFF 303099) (Mesorhizobium loti (strain MAFF 303099)).